We begin with the raw amino-acid sequence, 291 residues long: Gamma-sarcoglycan (291 aa).

At 1-37 (MVREQYTTATEGICIERPENQYVYKIGIYGWRKRCLY) the chain is on the cytoplasmic side. A helical; Signal-anchor for type II membrane protein transmembrane segment spans residues 38 to 58 (LFVLLLLIILVVNLALTIWIL). Topologically, residues 59 to 291 (KVMWFSPAGM…TCQEHNHICL (233 aa)) are extracellular. N-linked (GlcNAc...) asparagine glycosylation is present at Asn110. Cystine bridges form between Cys265-Cys290 and Cys267-Cys283.

It belongs to the sarcoglycan beta/delta/gamma/zeta family. In terms of assembly, interacts with the syntrophin SNTA1. Cross-link to form 2 major subcomplexes: one consisting of SGCB, SGCD and SGCG and the other consisting of SGCB and SGCD. The association between SGCB and SGCG is particularly strong while SGCA is loosely associated with the other sarcoglycans. Interacts with FLNC. As to expression, expressed in skeletal and heart muscle.

It localises to the cell membrane. It is found in the sarcolemma. Its subcellular location is the cytoplasm. The protein localises to the cytoskeleton. Functionally, component of the sarcoglycan complex, a subcomplex of the dystrophin-glycoprotein complex which forms a link between the F-actin cytoskeleton and the extracellular matrix. This chain is Gamma-sarcoglycan (SGCG), found in Homo sapiens (Human).